We begin with the raw amino-acid sequence, 1311 residues long: Ubiquitin carboxyl-terminal hydrolase 36 (1311 aa).

2 stretches are compositionally biased toward low complexity: residues 120–134 (AAAA…SAGS) and 156–174 (STPT…SSSS). Residues 120 to 189 (AAAATNNGNS…NPNELPKPKR (70 aa)) are disordered. In terms of domain architecture, USP spans 212–533 (AGMINVGNTC…NSYIMFYELD (322 aa)). The active-site Nucleophile is the C221. H492 acts as the Proton acceptor in catalysis. The interval 546 to 575 (NGLRQLSNGHHHHQQQQQQHQQQQQQQPTV) is disordered. Over residues 560 to 572 (QQQQQHQQQQQQQ) the composition is skewed to low complexity. The residue at position 581 (S581) is a Phosphoserine. Disordered regions lie at residues 587 to 620 (TRFI…GHSQ), 640 to 1095 (KFQE…GCLN), and 1136 to 1311 (DHGD…QQQS). Composition is skewed to low complexity over residues 605-616 (TTTTTATNNTTN), 660-716 (APAV…QQQQ), and 759-774 (TLTL…STPT). Phosphothreonine is present on T767. Phosphoserine occurs at positions 787 and 789. Over residues 795-826 (SSGTPSSSTPTTTTTAAAAAASSPMQATAAAT) the composition is skewed to low complexity. The segment covering 836–853 (ARKRSLPDHHHHHPHHHV) has biased composition (basic residues). A compositionally biased stretch (polar residues) spans 869-879 (PATNFNSSSSK). Residues 880–889 (QKTDAIDEIF) are compositionally biased toward basic and acidic residues. Basic residues predominate over residues 896–905 (NKKRINNKNQ). Over residues 910–920 (GDEEEDDEETL) the composition is skewed to acidic residues. Low complexity-rich tracts occupy residues 925 to 942 (NNSS…PTTN) and 950 to 979 (VSSS…STSA). Pro residues predominate over residues 980 to 989 (PPSPKTPPSP). S982 bears the Phosphoserine mark. T985 is modified (phosphothreonine). S988 bears the Phosphoserine mark. Residues 1006–1020 (DDDDDEEEEDEDDEE) are compositionally biased toward acidic residues. Residues 1037 to 1050 (PFSSQQKPTPSPST) are compositionally biased toward low complexity. S1047 carries the phosphoserine modification. The residue at position 1050 (T1050) is a Phosphothreonine. The span at 1060–1081 (FNGTSSSTPHVGNGYQSEPSTP) shows a compositional bias: polar residues. 2 stretches are compositionally biased toward low complexity: residues 1154–1176 (VVTT…TADA) and 1204–1221 (TANG…PGYN). A compositionally biased stretch (polar residues) spans 1246–1255 (QHASSSYRSN). A compositionally biased stretch (gly residues) spans 1267–1276 (GGNGGGGSGG).

The protein belongs to the peptidase C19 family. Interacts with atms/PAF1, but not with CycT.

The protein resides in the nucleus. Its subcellular location is the nucleolus. It catalyses the reaction Thiol-dependent hydrolysis of ester, thioester, amide, peptide and isopeptide bonds formed by the C-terminal Gly of ubiquitin (a 76-residue protein attached to proteins as an intracellular targeting signal).. Functionally, required for maintaining multiple types of adult stem cells, including male and female germline, epithelial follicle cell and intestinal stem cells. May function as a transcriptional repressor by continually deubiquiting histone H2B at the promoters of genes critical for cellular differentiation, thereby preventing histone H3 'Lys-4' trimethylation (H3K4). Controls selective autophagy activation by ubiquitinated proteins. The sequence is that of Ubiquitin carboxyl-terminal hydrolase 36 (Usp36) from Drosophila willistoni (Fruit fly).